Consider the following 384-residue polypeptide: Isoafricanol synthase (384 aa).

Mg(2+)-binding residues include Asp95, Asn245, Ser249, and Glu253.

The protein belongs to the terpene synthase family. Mg(2+) serves as cofactor.

The enzyme catalyses (2E,6E)-farnesyl diphosphate + H2O = (+)-isoafricanol + diphosphate. Functionally, catalyzes the cyclization of farnesyl diphosphate (FPP) to isoafricanol. The polypeptide is Isoafricanol synthase (Streptomyces violaceusniger (strain Tu 4113)).